The chain runs to 1099 residues: Solute carrier family 12 member 1 (1099 aa).

At 1–177 (MSLNNSSNVF…EDDQAGVVKF (177 aa)) the chain is on the cytoplasmic side. Residues 20 to 23 (RFQV) carry the RFXV motif motif. The interval 31-53 (ESSAAADDNTDPPHYEETSFGDE) is disordered. Ser-61 is subject to Phosphoserine. Ser-91 bears the Phosphoserine; by OXSR1 and STK39 mark. Thr-95 is modified (phosphothreonine). Residues Thr-100 and Thr-105 each carry the phosphothreonine; by OXSR1 and STK39 modification. At Thr-118 the chain carries Phosphothreonine. At Ser-120 the chain carries Phosphoserine. Residue Ser-130 is modified to Phosphoserine; by AMPK. A Phosphoserine modification is found at Ser-148. The helical transmembrane segment at 178 to 198 (GWVKGVLVRCMLNIWGVMLFI) threads the bilayer. Residues 199-201 (RLS) lie on the Extracellular side of the membrane. The chain crosses the membrane as a helical span at residues 202-222 (WIVGEAGIGLGVLIILLSTMV). Over 223-259 (TSITGLSTSAIATNGFVRGGGAYYLISRSLGPEFGGS) the chain is Cytoplasmic. Residues 260–280 (IGLIFAFANAVAVAMYVVGFA) form a helical membrane-spanning segment. Topologically, residues 281 to 302 (ETVVDLLKESDSMMVDPTNDIR) are extracellular. The chain crosses the membrane as a helical span at residues 303 to 323 (IIGSITVVILLGISVAGMEWE). Residues 324–327 (AKAQ) are Cytoplasmic-facing. A helical membrane pass occupies residues 328 to 348 (VILLVILLIAIANFFIGTVIP). Residues 349–379 (SNNEKKSRGFFNYQASIFAENFGPRFTKGEG) are Extracellular-facing. Residues 380–400 (FFSVFAIFFPAATGILAGANI) traverse the membrane as a helical segment. At 401-417 (SGDLEDPQDAIPRGTML) the chain is on the cytoplasmic side. Residues 418–438 (AIFITTVAYLGVAICVGACVV) form a helical membrane-spanning segment. Over 439-550 (RDATGNMNDT…NNEPLRGYIL (112 aa)) the chain is Extracellular. Residues Asn-446 and Asn-456 are each glycosylated (N-linked (GlcNAc...) asparagine). 2 consecutive transmembrane segments (helical) span residues 551–571 (TFLI…APII) and 572–592 (SNFF…ASYA). Over 593-609 (KSPGWRPAYGIYNMWVS) the chain is Extracellular. Residues 610–630 (LFGAVLCCAVMFVINWWAAVI) traverse the membrane as a helical segment. Over 631 to 1099 (TYVIEFFLYV…NHKNVLTFYS (469 aa)) the chain is Cytoplasmic.

The protein belongs to the SLC12A transporter family. As to quaternary structure, when phosphorylated, interacts with PPP3CB. Phosphorylated at Ser-91, Thr-100 and Thr-105 by OXSR1/OSR1 and STK39/SPAK downstream of WNK kinases (WNK1, WNK2, WNK3 or WNK4), promoting its activity. Kidney; localizes to the thick ascending limbs (at protein level).

Its subcellular location is the apical cell membrane. It carries out the reaction K(+)(out) + 2 chloride(out) + Na(+)(out) = K(+)(in) + 2 chloride(in) + Na(+)(in). With respect to regulation, activated following phosphorylation by OXSR1/OSR1 and STK39/SPAK downstream of WNK kinases (WNK1, WNK2, WNK3 or WNK4). In terms of biological role, renal sodium, potassium and chloride ion cotransporter that mediates the transepithelial NaCl reabsorption in the thick ascending limb and plays an essential role in the urinary concentration and volume regulation. Electrically silent transporter system. This Homo sapiens (Human) protein is Solute carrier family 12 member 1 (SLC12A1).